Consider the following 726-residue polypeptide: uncharacterized protein (726 aa).

Active-site charge relay system residues include Ser583 and His698.

Belongs to the peptidase S9B family.

This is an uncharacterized protein from Sinorhizobium fredii (strain NBRC 101917 / NGR234).